The sequence spans 471 residues: Putative multidrug resistance protein MdtD (471 aa).

Transmembrane regions (helical) follow at residues 12–32 (LWIV…VNTA), 49–69 (MVIV…GWMA), 72–92 (IGVR…SLFC), 101–123 (LVMS…RLTV), 138–158 (FVTL…GILV), 165–185 (WIFL…LWLM), 195–215 (FDIF…LALD), 220–240 (LGIS…SILW), 265–285 (IGLF…FMTP), 286–306 (VFLQ…MIPM), 342–362 (LVFM…VLFF), 393–413 (LLSM…GLLL), and 431–451 (VFLY…LIFA).

The protein belongs to the major facilitator superfamily. TCR/Tet family.

The protein localises to the cell inner membrane. In Enterobacter sp. (strain 638), this protein is Putative multidrug resistance protein MdtD.